The primary structure comprises 319 residues: Cell division protein FtsQ (319 aa).

Residues 1 to 53 (MDSREDMVPDVLLEAPNPRRRQSADTSTERPTRPARREQGYARVTPRGERMGN) form a disordered region. Residues 1 to 70 (MDSREDMVPD…PDFFAWFDPR (70 aa)) are Cytoplasmic-facing. The segment covering 27–52 (STERPTRPARREQGYARVTPRGERMG) has biased composition (basic and acidic residues). A helical membrane pass occupies residues 71 to 87 (WLWVPLMVCLAVGGYWA). Residues 88-319 (YEPLEKLLER…NATRNAPTHP (232 aa)) are Periplasmic-facing. The POTRA domain occupies 97-166 (RPFKSVVVEG…DTLVVKIAEQ (70 aa)).

This sequence belongs to the FtsQ/DivIB family. FtsQ subfamily. In terms of assembly, part of a complex composed of FtsB, FtsL and FtsQ.

It localises to the cell inner membrane. Essential cell division protein. May link together the upstream cell division proteins, which are predominantly cytoplasmic, with the downstream cell division proteins, which are predominantly periplasmic. May control correct divisome assembly. The polypeptide is Cell division protein FtsQ (Cellvibrio japonicus (strain Ueda107) (Pseudomonas fluorescens subsp. cellulosa)).